A 230-amino-acid polypeptide reads, in one-letter code: 2,3-bisphosphoglycerate-dependent phosphoglycerate mutase (230 aa).

Residues 8–15, 21–22, arginine 60, 87–90, lysine 98, and 114–115 each bind substrate; these read RHGQSIWN, TG, ERHY, and RR. Residue histidine 9 is the Tele-phosphohistidine intermediate of the active site. Residue glutamate 87 is the Proton donor/acceptor of the active site. Residues 117-143 are disordered; it reads YDTPPPALDAEDERHPRHDPRYAGLDP. The segment covering 128–137 has biased composition (basic and acidic residues); that stretch reads DERHPRHDPR. Position 183–184 (183–184) interacts with substrate; it reads GN.

This sequence belongs to the phosphoglycerate mutase family. BPG-dependent PGAM subfamily. Homodimer.

It catalyses the reaction (2R)-2-phosphoglycerate = (2R)-3-phosphoglycerate. It participates in carbohydrate degradation; glycolysis; pyruvate from D-glyceraldehyde 3-phosphate: step 3/5. In terms of biological role, catalyzes the interconversion of 2-phosphoglycerate and 3-phosphoglycerate. This Halorhodospira halophila (strain DSM 244 / SL1) (Ectothiorhodospira halophila (strain DSM 244 / SL1)) protein is 2,3-bisphosphoglycerate-dependent phosphoglycerate mutase.